Consider the following 459-residue polypeptide: MPSKTDFTSSTMTPREIVQELDRHIVGQQVAKRSVAIALRNRWRRMQLPEELRNEVMPKNILMIGPTGVGKTEIARRLATLANAPFVKVEATRFTEVGYVGKDVEQIGRDLVDTAVKMYREQAKVRVRTQVEEYAEERILDALLPRRSVGIGFDVDADVIRQEPSAHDSETRAKFRRMLRSGELEDREIELDVAVNVSMDIMTPPGMEEMGQQLRQMFSNIGGGKSQKRKLTIKAARPLLIEEEAAKLVNEDEIRAAAIEACEQNGIVFIDEIDKVVKRGDTVGGGDVSREGVQRDLLPLVEGSNVSTKYGTIRTNHILFIASGAFHLTKPSDLIPELQGRFPIRVELDALSKADFIRILTEPKAALTKQYQELLKTEGVSLDFTEDAIDRIAEIAYLVNERQENIGARRLHTVLERLLETLSYESPDRDGESVTVDADYVNAHLGELVKDPDLSRYIL.

ATP contacts are provided by residues V26, 68–73 (GVGKTE), D271, E337, and R409.

Belongs to the ClpX chaperone family. HslU subfamily. In terms of assembly, a double ring-shaped homohexamer of HslV is capped on each side by a ring-shaped HslU homohexamer. The assembly of the HslU/HslV complex is dependent on binding of ATP.

The protein localises to the cytoplasm. ATPase subunit of a proteasome-like degradation complex; this subunit has chaperone activity. The binding of ATP and its subsequent hydrolysis by HslU are essential for unfolding of protein substrates subsequently hydrolyzed by HslV. HslU recognizes the N-terminal part of its protein substrates and unfolds these before they are guided to HslV for hydrolysis. The polypeptide is ATP-dependent protease ATPase subunit HslU (Xylella fastidiosa (strain M12)).